The sequence spans 415 residues: Serine--tRNA ligase (415 aa).

Residue 231–233 (TAE) coordinates L-serine. 262–264 (RSE) provides a ligand contact to ATP. E285 lines the L-serine pocket. 349-352 (EISS) lines the ATP pocket. Residue S383 coordinates L-serine.

Belongs to the class-II aminoacyl-tRNA synthetase family. Type-1 seryl-tRNA synthetase subfamily. In terms of assembly, homodimer. The tRNA molecule binds across the dimer.

The protein localises to the cytoplasm. The catalysed reaction is tRNA(Ser) + L-serine + ATP = L-seryl-tRNA(Ser) + AMP + diphosphate + H(+). The enzyme catalyses tRNA(Sec) + L-serine + ATP = L-seryl-tRNA(Sec) + AMP + diphosphate + H(+). It functions in the pathway aminoacyl-tRNA biosynthesis; selenocysteinyl-tRNA(Sec) biosynthesis; L-seryl-tRNA(Sec) from L-serine and tRNA(Sec): step 1/1. Catalyzes the attachment of serine to tRNA(Ser). Is also able to aminoacylate tRNA(Sec) with serine, to form the misacylated tRNA L-seryl-tRNA(Sec), which will be further converted into selenocysteinyl-tRNA(Sec). The sequence is that of Serine--tRNA ligase from Helicobacter pylori (strain P12).